The sequence spans 149 residues: 3-dehydroquinate dehydratase (149 aa).

Catalysis depends on Y22, which acts as the Proton acceptor. N73, H79, and D86 together coordinate substrate. H99 serves as the catalytic Proton donor. Substrate-binding positions include 100-101 and R110; that span reads LS.

The protein belongs to the type-II 3-dehydroquinase family. As to quaternary structure, homododecamer.

The catalysed reaction is 3-dehydroquinate = 3-dehydroshikimate + H2O. The protein operates within metabolic intermediate biosynthesis; chorismate biosynthesis; chorismate from D-erythrose 4-phosphate and phosphoenolpyruvate: step 3/7. Catalyzes a trans-dehydration via an enolate intermediate. This Prochlorococcus marinus (strain MIT 9313) protein is 3-dehydroquinate dehydratase.